Here is a 183-residue protein sequence, read N- to C-terminus: Nucleosome assembly protein 1-like 5 (183 aa).

The segment at 1 to 71 (MADSENQGPA…APKPKNDFIE (71 aa)) is disordered. 2 stretches are compositionally biased toward low complexity: residues 7 to 21 (QGPA…AAEA) and 28 to 49 (AEGG…SAAG). The stretch at 81-107 (VLALKKLQKRCDKIEAKFDKEFQALEK) forms a coiled coil. Residues 135–161 (EGEEEEEEEYEDDEEEGEEEEEEEEAA) show a composition bias toward acidic residues. The disordered stretch occupies residues 135 to 183 (EGEEEEEEEYEDDEEEGEEEEEEEEAAAEAAAGAKHDDAHAEMPDDAKK). The span at 168–183 (AKHDDAHAEMPDDAKK) shows a compositional bias: basic and acidic residues.

Belongs to the nucleosome assembly protein (NAP) family.

The protein localises to the nucleus. The protein is Nucleosome assembly protein 1-like 5 (NAP1L5) of Pongo abelii (Sumatran orangutan).